A 210-amino-acid chain; its full sequence is Adenylate kinase (210 aa).

An ATP-binding site is contributed by 10-15; it reads GSGKGT. The segment at 30–59 is NMP; that stretch reads STGDLFRANISNATPLGKEIKQIVENGQLV. Residues T31, R36, 57-59, 85-88, and Q92 contribute to the AMP site; these read QLV and GFPR. The interval 121-158 is LID; it reads GRRICQSCGGIFNIYTLPTKEKGICDLCKGSLYQRKDD. Residue R122 coordinates ATP. Zn(2+) contacts are provided by C125 and C128. 131–132 is an ATP binding site; it reads IF. Residues C145 and C148 each contribute to the Zn(2+) site. The AMP site is built by R155 and R166. ATP is bound at residue K194.

This sequence belongs to the adenylate kinase family. In terms of assembly, monomer.

The protein resides in the cytoplasm. It catalyses the reaction AMP + ATP = 2 ADP. It functions in the pathway purine metabolism; AMP biosynthesis via salvage pathway; AMP from ADP: step 1/1. Functionally, catalyzes the reversible transfer of the terminal phosphate group between ATP and AMP. Plays an important role in cellular energy homeostasis and in adenine nucleotide metabolism. In Borrelia turicatae (strain 91E135), this protein is Adenylate kinase.